A 301-amino-acid chain; its full sequence is Glycine--tRNA ligase alpha subunit (301 aa).

This sequence belongs to the class-II aminoacyl-tRNA synthetase family. Tetramer of two alpha and two beta subunits.

It is found in the cytoplasm. It carries out the reaction tRNA(Gly) + glycine + ATP = glycyl-tRNA(Gly) + AMP + diphosphate. The polypeptide is Glycine--tRNA ligase alpha subunit (Shewanella halifaxensis (strain HAW-EB4)).